Consider the following 571-residue polypeptide: Arginine--tRNA ligase (571 aa).

A 'HIGH' region motif is present at residues 122 to 132; that stretch reads PNIAKEMHVGH.

The protein belongs to the class-I aminoacyl-tRNA synthetase family. In terms of assembly, monomer.

It is found in the cytoplasm. It carries out the reaction tRNA(Arg) + L-arginine + ATP = L-arginyl-tRNA(Arg) + AMP + diphosphate. The polypeptide is Arginine--tRNA ligase (Buchnera aphidicola subsp. Cinara cedri (strain Cc)).